Consider the following 860-residue polypeptide: DNA mismatch repair protein MutS (860 aa).

Glycine 625–serine 632 is a binding site for ATP.

It belongs to the DNA mismatch repair MutS family.

In terms of biological role, this protein is involved in the repair of mismatches in DNA. It is possible that it carries out the mismatch recognition step. This protein has a weak ATPase activity. The protein is DNA mismatch repair protein MutS of Aeromonas hydrophila subsp. hydrophila (strain ATCC 7966 / DSM 30187 / BCRC 13018 / CCUG 14551 / JCM 1027 / KCTC 2358 / NCIMB 9240 / NCTC 8049).